We begin with the raw amino-acid sequence, 226 residues long: Peroxynitrite isomerase 2 (226 aa).

Positions 73-79 (GVWRGEG) match the GXWXGXG motif. Residues Lys189 and His216 each contribute to the heme b site.

Belongs to the nitrobindin family. Homodimer. Heme b serves as cofactor.

It catalyses the reaction peroxynitrite = nitrate. The protein operates within nitrogen metabolism. Its function is as follows. Heme-binding protein able to scavenge peroxynitrite and to protect free L-tyrosine against peroxynitrite-mediated nitration, by acting as a peroxynitrite isomerase that converts peroxynitrite to nitrate. Therefore, this protein likely plays a role in peroxynitrite sensing and in the detoxification of reactive nitrogen and oxygen species (RNS and ROS, respectively). Is able to bind nitric oxide (NO) in vitro, but may act as a sensor of peroxynitrite levels in vivo. The polypeptide is Peroxynitrite isomerase 2 (Mycobacterium bovis (strain ATCC BAA-935 / AF2122/97)).